We begin with the raw amino-acid sequence, 144 residues long: Glycine-rich protein HC1 (144 aa).

Residues 5-25 traverse the membrane as a helical segment; it reads IFLLLGLSIAFAILISSEVAA. 11 consecutive repeat copies span residues 37–42, 43–48, 50–55, 56–61, 63–68, 69–74, 76–81, 82–87, 89–94, 102–107, and 108–113. The interval 37 to 113 is 11 X 6 AA tandem repeats of G-Y-[NH]-N-G -G; sequence GYNNGGGYHN…NNGGGYHGGG (77 aa).

Belongs to the GRP family.

The protein resides in the membrane. The chain is Glycine-rich protein HC1 from Oxybasis rubra (Red goosefoot).